Consider the following 31-residue polypeptide: Cytochrome b6-f complex subunit 6 (31 aa).

A helical transmembrane segment spans residues 4–24; that stretch reads LTSYFGFLLAALTITFVLFIG.

The protein belongs to the PetL family. The 4 large subunits of the cytochrome b6-f complex are cytochrome b6, subunit IV (17 kDa polypeptide, PetD), cytochrome f and the Rieske protein, while the 4 small subunits are PetG, PetL, PetM and PetN. The complex functions as a dimer.

The protein resides in the plastid. The protein localises to the chloroplast thylakoid membrane. Component of the cytochrome b6-f complex, which mediates electron transfer between photosystem II (PSII) and photosystem I (PSI), cyclic electron flow around PSI, and state transitions. PetL is important for photoautotrophic growth as well as for electron transfer efficiency and stability of the cytochrome b6-f complex. In Oxybasis rubra (Red goosefoot), this protein is Cytochrome b6-f complex subunit 6.